Consider the following 511-residue polypeptide: GMP synthase [glutamine-hydrolyzing] (511 aa).

In terms of domain architecture, Glutamine amidotransferase type-1 spans 5-195 (AILVLDFGSQ…VFKICQAQIN (191 aa)). The active-site Nucleophile is C82. Active-site residues include H169 and E171. Residues 196–386 (WSLEGNLETI…LGIKKESLYR (191 aa)) form the GMPS ATP-PPase domain. 223-229 (SGGTDSL) contributes to the ATP binding site.

As to quaternary structure, homodimer.

The enzyme catalyses XMP + L-glutamine + ATP + H2O = GMP + L-glutamate + AMP + diphosphate + 2 H(+). The protein operates within purine metabolism; GMP biosynthesis; GMP from XMP (L-Gln route): step 1/1. Functionally, catalyzes the synthesis of GMP from XMP. This chain is GMP synthase [glutamine-hydrolyzing] (guaA), found in Borreliella burgdorferi (strain N40) (Borrelia burgdorferi).